A 306-amino-acid polypeptide reads, in one-letter code: Grixazone synthase (306 aa).

Cu(2+) contacts are provided by His39, His58, His67, His222, His226, and His248.

This sequence belongs to the tyrosinase family. Cu(2+) is required as a cofactor.

The catalysed reaction is 2 3-amino-4-hydroxybenzoate + N-acetyl-L-cysteine + 2 O2 + H(+) = grixazone B + CO2 + 4 H2O. It carries out the reaction 2 3-amino-4-hydroxybenzaldehyde + N-acetyl-L-cysteine + 2 O2 = grixazone A + formate + 3 H2O + H(+). The enzyme catalyses 4 2-aminophenol + 3 O2 = 2 2-aminophenoxazin-3-one + 6 H2O. With respect to regulation, inhibited by 3-amino-4-hydroxybenzensulfonic acid, 4-hydroxy-3-nitrobenzaldehyde, L-tyrosine, p-hydroxybenzaldehyde. Activated by the copper chaperone GriE. Involved in the biosynthesis of the parasiticide antibiotic grixazone. Catalyzes the oxidation of 3-amino-4-hydroxybenzoate (3,4-AHBOA) to yield the corresponding quinone imine which is then non-enzymatically conjugated with the thiol group of N-acetylcysteine. The resultant compound is oxidized to its quinone imine enzymatically and is then dimerized non-enzymatically with another quinone imine oxidized by GriF to yield grixazone B. 3-amino-4-hydroxybenzaldehyde (3,4-AHBAL) can also be used as substrate to yield grixazone A. In the grixazone biosynthetic pathway, it can also function as an o-aminophenol oxidase that catalyzes the formation of the phenoxazinone chromophore from alpha-aminophenol. It can also use 2-amino-4-methylphenol, and to a lesser extent, 3,4-dihydroxybenzaldehyde, catechol and 3,4-dihydroxy-L-phenylalanine (L-DOPA) as substrates. In contrast to tyrosinases, it does not display monophenolase activity. This is Grixazone synthase from Streptomyces griseus subsp. griseus (strain JCM 4626 / CBS 651.72 / NBRC 13350 / KCC S-0626 / ISP 5235).